Here is a 216-residue protein sequence, read N- to C-terminus: Adenylate kinase (216 aa).

10–15 lines the ATP pocket; sequence GAGKGT. The NMP stretch occupies residues 30-59; sequence STGDMLRAAVAAGTEVGKRAKAVMDAGKLV. Residues T31, R36, 57–59, 85–88, and Q92 contribute to the AMP site; these read KLV and GFPR. The segment at 126-163 is LID; the sequence is GRYTCANCGAGYHDENLRPKVEGVCDRCGSTHFKRRAD. An ATP-binding site is contributed by R127. Zn(2+)-binding residues include C130, C133, C150, and C153. Positions 160 and 172 each coordinate AMP. A200 is a binding site for ATP.

The protein belongs to the adenylate kinase family. Monomer.

It is found in the cytoplasm. The catalysed reaction is AMP + ATP = 2 ADP. It participates in purine metabolism; AMP biosynthesis via salvage pathway; AMP from ADP: step 1/1. Functionally, catalyzes the reversible transfer of the terminal phosphate group between ATP and AMP. Plays an important role in cellular energy homeostasis and in adenine nucleotide metabolism. The chain is Adenylate kinase from Rhizobium rhizogenes (strain K84 / ATCC BAA-868) (Agrobacterium radiobacter).